A 154-amino-acid polypeptide reads, in one-letter code: D-aminoacyl-tRNA deacylase (154 aa).

The Gly-cisPro motif, important for rejection of L-amino acids signature appears at 142 to 143; sequence GP.

Belongs to the DTD family. As to quaternary structure, homodimer.

It is found in the cytoplasm. The catalysed reaction is glycyl-tRNA(Ala) + H2O = tRNA(Ala) + glycine + H(+). It carries out the reaction a D-aminoacyl-tRNA + H2O = a tRNA + a D-alpha-amino acid + H(+). Its function is as follows. An aminoacyl-tRNA editing enzyme that deacylates mischarged D-aminoacyl-tRNAs. Also deacylates mischarged glycyl-tRNA(Ala), protecting cells against glycine mischarging by AlaRS. Acts via tRNA-based rather than protein-based catalysis; rejects L-amino acids rather than detecting D-amino acids in the active site. By recycling D-aminoacyl-tRNA to D-amino acids and free tRNA molecules, this enzyme counteracts the toxicity associated with the formation of D-aminoacyl-tRNA entities in vivo and helps enforce protein L-homochirality. The sequence is that of D-aminoacyl-tRNA deacylase from Polaromonas naphthalenivorans (strain CJ2).